We begin with the raw amino-acid sequence, 277 residues long: MGIKTYRPKTSSLRYKTTLSFDELSKGNDPLKSLTKGKVSRAGRDSSGRISVRRRGGGHKRRYREIDFARRDKFGIPARVAAIEYDPNRSPNIALLVYRDGDKRYIIAPKGVKVGDILESGPNAPIKIGNALPLENIPVGKMVHNIELNIGKGGQLVRGAGGYAMIIASDGDYVTVKLPSGEMRMIFKKCIATLGEVGNEDYMNVSIGKAGKSRWLGRRPKVRGVAMNPIDHPHGGGEGKTSGGRHPVSPWGQPAKGYKTRKKNKYSDKFIVKRRNN.

Disordered stretches follow at residues 32–58 (KSLTKGKVSRAGRDSSGRISVRRRGGG) and 225–277 (VAMN…RRNN).

This sequence belongs to the universal ribosomal protein uL2 family. As to quaternary structure, part of the 50S ribosomal subunit. Forms a bridge to the 30S subunit in the 70S ribosome.

Functionally, one of the primary rRNA binding proteins. Required for association of the 30S and 50S subunits to form the 70S ribosome, for tRNA binding and peptide bond formation. It has been suggested to have peptidyltransferase activity; this is somewhat controversial. Makes several contacts with the 16S rRNA in the 70S ribosome. The sequence is that of Large ribosomal subunit protein uL2 from Borrelia duttonii (strain Ly).